The sequence spans 158 residues: Transcription elongation factor GreA (158 aa).

Residues 47-74 (NSEYDEAKNEQAFTEGRIIQLENMLKNA) adopt a coiled-coil conformation.

Belongs to the GreA/GreB family.

Necessary for efficient RNA polymerase transcription elongation past template-encoded arresting sites. The arresting sites in DNA have the property of trapping a certain fraction of elongating RNA polymerases that pass through, resulting in locked ternary complexes. Cleavage of the nascent transcript by cleavage factors such as GreA or GreB allows the resumption of elongation from the new 3'terminus. GreA releases sequences of 2 to 3 nucleotides. This is Transcription elongation factor GreA from Clostridium perfringens (strain ATCC 13124 / DSM 756 / JCM 1290 / NCIMB 6125 / NCTC 8237 / Type A).